The chain runs to 387 residues: MASSRVSDLPHQRGIAGEIKPKNVAGHGRQNRKVLGDIGNLVTGRDVATGKDVAKKAKQPQQQTKAEVIVISPDENEKCKPHFSRRTHIRGTKTFTATLRARSKAASGLKDAVIDIDAVDANNELAAVEYVEDIFKFYRTVEEEGGIKDYIGSQPEINEKMRSILIDWLVDVHRKFELMPETLYLTINLVDRFLSLTMVHRRELQLLGLGAMLIACKYEEIWAPEVNDFVCISDNAYNRKQVLAMEKSILGQVEWYITVPTPYVFLARYVKAAVPCDAEMEKLVFYLAELGLMQYPIVVLNRPSMLAASAVYAARQILKKTPFWTETLKHHTGYSEDEIMEHAKMLMKLRDSASESKLIAVFKKYSVSENAEVALLPSLDDFSVSCA.

The interval Met1–Arg29 is disordered.

It belongs to the cyclin family. Cyclin AB subfamily.

In Arabidopsis thaliana (Mouse-ear cress), this protein is Cyclin-B1-4 (CYCB1-4).